The following is a 432-amino-acid chain: Asparagine--tRNA ligase (432 aa).

The protein belongs to the class-II aminoacyl-tRNA synthetase family. As to quaternary structure, homodimer.

It localises to the cytoplasm. The enzyme catalyses tRNA(Asn) + L-asparagine + ATP = L-asparaginyl-tRNA(Asn) + AMP + diphosphate + H(+). The protein is Asparagine--tRNA ligase of Lactobacillus gasseri (strain ATCC 33323 / DSM 20243 / BCRC 14619 / CIP 102991 / JCM 1131 / KCTC 3163 / NCIMB 11718 / NCTC 13722 / AM63).